The following is a 428-amino-acid chain: 3-phosphoshikimate 1-carboxyvinyltransferase (428 aa).

Residues K23, S24, and R28 each coordinate 3-phosphoshikimate. K23 contributes to the phosphoenolpyruvate binding site. 2 residues coordinate phosphoenolpyruvate: G97 and R125. Positions 170, 171, 172, 198, 314, 337, and 341 each coordinate 3-phosphoshikimate. Residue Q172 participates in phosphoenolpyruvate binding. The Proton acceptor role is filled by D314. Residues R345, R387, and K412 each coordinate phosphoenolpyruvate.

This sequence belongs to the EPSP synthase family. As to quaternary structure, monomer.

Its subcellular location is the cytoplasm. The enzyme catalyses 3-phosphoshikimate + phosphoenolpyruvate = 5-O-(1-carboxyvinyl)-3-phosphoshikimate + phosphate. It participates in metabolic intermediate biosynthesis; chorismate biosynthesis; chorismate from D-erythrose 4-phosphate and phosphoenolpyruvate: step 6/7. Its function is as follows. Catalyzes the transfer of the enolpyruvyl moiety of phosphoenolpyruvate (PEP) to the 5-hydroxyl of shikimate-3-phosphate (S3P) to produce enolpyruvyl shikimate-3-phosphate and inorganic phosphate. The chain is 3-phosphoshikimate 1-carboxyvinyltransferase from Buchnera aphidicola subsp. Schizaphis graminum (strain Sg).